A 144-amino-acid chain; its full sequence is Putative pre-16S rRNA nuclease (144 aa).

The protein belongs to the YqgF nuclease family.

It is found in the cytoplasm. Could be a nuclease involved in processing of the 5'-end of pre-16S rRNA. The protein is Putative pre-16S rRNA nuclease of Chlorobium phaeobacteroides (strain BS1).